Reading from the N-terminus, the 45-residue chain is Large ribosomal subunit protein bL34 (45 aa).

The tract at residues 1–45 (MTKRTFGGTSRKRKRVSGFRVRMRTHTGRSVIRSRRKKGRSRIAV) is disordered. Residues 10-45 (SRKRKRVSGFRVRMRTHTGRSVIRSRRKKGRSRIAV) show a composition bias toward basic residues.

This sequence belongs to the bacterial ribosomal protein bL34 family.

The chain is Large ribosomal subunit protein bL34 from Prochlorococcus marinus (strain SARG / CCMP1375 / SS120).